Reading from the N-terminus, the 229-residue chain is MEAVAKYDFKATADDELSFKRGDILKVLNEECDQNWYKAELNGKDGFIPKNYIEMKPHPWFFGKIPRAKAEEMLGKQRHDGAFLIRESESAPGDFSLSVKFGNDVQHFKVLRDGAGKYFLWVVKFNSLNELVDYHRSTSVSRNQQIFLRDIEQVPQVHGGDRATNLLQQPTYVQALFDFDPQEDGELGFRRGDFIQVVDNSDPNWWKGTCLGQTGMFPRNYVTPVNRNM.

SH3 domains lie at 1 to 58 (MEAV…MKPH) and 168 to 227 (QQPT…PVNR). The SH2 domain occupies 60 to 171 (WFFGKIPRAK…RATNLLQQPT (112 aa)).

It is found in the nucleus. The protein resides in the cytoplasm. Its subcellular location is the endosome. It localises to the golgi apparatus. Its function is as follows. Adapter protein that provides a critical link between cell surface growth factor receptors and the Ras signaling pathway. Promotes meiotic reinitiation during oocyte maturation. The protein is Growth factor receptor-bound protein 2 of Xenopus tropicalis (Western clawed frog).